Consider the following 358-residue polypeptide: CCAAT/enhancer-binding protein alpha (358 aa).

Residues 1-55 (MESADFYEAEPRPPMSSHLQSPPHAPSNAAFGFPRGAGPAPPPAPPAAPEPLGGI) form a disordered region. The interval 1–70 (MESADFYEAE…SIDISAYIDP (70 aa)) is required to repress E2F1:TFDP1-mediated transcription, to inhibit cell cycle and to induce adipocyte differentiation. Positions 29-38 (AAFGFPRGAG) are enriched in low complexity. Over residues 39–49 (PAPPPAPPAAP) the composition is skewed to pro residues. The segment at 54–72 (GICEHETSIDISAYIDPAA) is required for interaction with TRIB1. Residues 126–200 (PPGYGCAAAG…HASPAHLAAP (75 aa)) are required to induce adipocyte differentiation. Lysine 159 carries the post-translational modification N6-acetyllysine; alternate. A Glycyl lysine isopeptide (Lys-Gly) (interchain with G-Cter in SUMO); alternate cross-link involves residue lysine 159. A Glycyl lysine isopeptide (Lys-Gly) (interchain with G-Cter in SUMO2); alternate cross-link involves residue lysine 159. 2 disordered regions span residues 176–195 (LFPY…ASPA) and 213–310 (TMHL…NVET). The span at 179–191 (YQPPPPPPPPHPH) shows a compositional bias: pro residues. Positions 180 to 194 (QPPPPPPPPHPHASP) are required to functionally cooperate with SREBF1 in promoter activation. Serine 193 bears the Phosphoserine mark. The segment covering 220–234 (HPTPPPTPVPSPHPA) has biased composition (pro residues). Residues threonine 222 and threonine 226 each carry the phosphothreonine; by GSK3 modification. Serine 230 bears the Phosphoserine; by GSK3 mark. The segment at 240-358 (AGLPGPGGSL…SLVKAMGNCA (119 aa)) is interaction with FOXO1. A compositionally biased stretch (gly residues) spans 261–271 (TGGGGGGGAGA). The span at 276–292 (KSVDKNSNEYRVRRERN) shows a compositional bias: basic and acidic residues. Residues 282–345 (SNEYRVRRER…DTLRGIFRQL (64 aa)) enclose the bZIP domain. The DNA-binding element occupies 285–300 (YRVRRERNNIAVRKSR). The basic motif stretch occupies residues 286-313 (RVRRERNNIAVRKSRDKAKQRNVETQQK). The interval 317 to 345 (LTSDNDRLRKRVEQLSRELDTLRGIFRQL) is leucine-zipper.

This sequence belongs to the bZIP family. C/EBP subfamily. As to quaternary structure, binds DNA as a homodimer and as a heterodimer. Can form stable heterodimers with CEBPB, CEBPD, CEBPE and CEBPG. Can form stable homodimers (also isoform 2 and isoform 3 dimers) and heterodimers with CEBPB (with isoform 2 and isoform 3) and CEBPG. Interacts with PRDM16. Interacts with UBN1. Interacts with ZNF638; this interaction increases transcriptional activation. Interacts with the complex TFDP2:E2F1; the interaction prevents CEBPA binding to target gene promoters and represses its transcriptional activity. Interacts with RB1. Interacts (when phosphorylated at Ser-193) with CDK2, CDK4, E2F4 and SMARCA2. Interacts with SREBPF1. Interacts with FOXO1 (via the Fork-head domain); the interaction increases when FOXO1 is deacetylated. Interacts with SIX1. Interacts (via recognition sequence) with TRIB1. In terms of assembly, interacts with TAF1A and UBTF. Interacts with NPM1. Post-translationally, sumoylated, sumoylation blocks the inhibitory effect on cell proliferation by disrupting the interaction with SMARCA2. In terms of processing, phosphorylation at Ser-193 is required for interaction with CDK2, CDK4 and SWI/SNF complex leading to cell cycle inhibition. Dephosphorylated at Ser-193 by protein phosphatase 2A (PP2A) through PI3K/AKT signaling pathway regulation. Phosphorylation at Thr-222 and Thr-226 by GSK3 is constitutive in adipose tissue and lung. In liver, both Thr-222 and Thr-226 are phosphorylated only during feeding but not during fasting. Phosphorylation of the GSK3 consensus sites selectively decreases transactivation activity on IRE-controlled promoters. Ubiquitinated by COP1 upon interaction with TRIB1. As to expression, isoform 2 and isoform 3 are expressed in liver (at protein level).

The protein localises to the nucleus. Its subcellular location is the nucleolus. In terms of biological role, transcription factor that coordinates proliferation arrest and the differentiation of myeloid progenitors, adipocytes, hepatocytes, and cells of the lung and the placenta. Binds directly to the consensus DNA sequence 5'-T[TG]NNGNAA[TG]-3' acting as an activator on distinct target genes. During early embryogenesis, plays essential and redundant functions with CEBPB. Essential for the transition from common myeloid progenitors (CMP) to granulocyte/monocyte progenitors (GMP). Critical for the proper development of the liver and the lung. Necessary for terminal adipocyte differentiation, is required for postnatal maintenance of systemic energy homeostasis and lipid storage. To regulate these different processes at the proper moment and tissue, interplays with other transcription factors and modulators. Down-regulates the expression of genes that maintain cells in an undifferentiated and proliferative state through E2F1 repression, which is critical for its ability to induce adipocyte and granulocyte terminal differentiation. Reciprocally E2F1 blocks adipocyte differentiation by binding to specific promoters and repressing CEBPA binding to its target gene promoters. Proliferation arrest also depends on a functional binding to SWI/SNF complex. In liver, regulates gluconeogenesis and lipogenesis through different mechanisms. To regulate gluconeogenesis, functionally cooperates with FOXO1 binding to IRE-controlled promoters and regulating the expression of target genes such as PCK1 or G6PC1. To modulate lipogenesis, interacts and transcriptionally synergizes with SREBF1 in promoter activation of specific lipogenic target genes such as ACAS2. In adipose tissue, seems to act as FOXO1 coactivator accessing to ADIPOQ promoter through FOXO1 binding sites. Functionally, can act as dominant-negative. Binds DNA and have transctivation activity, even if much less efficiently than isoform 2. Does not inhibit cell proliferation. Directly and specifically enhances ribosomal DNA transcription interacting with RNA polymerase I-specific cofactors and inducing histone acetylation. The sequence is that of CCAAT/enhancer-binding protein alpha from Rattus norvegicus (Rat).